Consider the following 227-residue polypeptide: 7-cyano-7-deazaguanine synthase (227 aa).

8-18 provides a ligand contact to ATP; sequence FSGGQDSTTCL. Zn(2+)-binding residues include Cys187, Cys196, Cys199, and Cys202.

It belongs to the QueC family. Zn(2+) is required as a cofactor.

The enzyme catalyses 7-carboxy-7-deazaguanine + NH4(+) + ATP = 7-cyano-7-deazaguanine + ADP + phosphate + H2O + H(+). The protein operates within purine metabolism; 7-cyano-7-deazaguanine biosynthesis. Functionally, catalyzes the ATP-dependent conversion of 7-carboxy-7-deazaguanine (CDG) to 7-cyano-7-deazaguanine (preQ(0)). The sequence is that of 7-cyano-7-deazaguanine synthase from Aliivibrio fischeri (strain ATCC 700601 / ES114) (Vibrio fischeri).